The sequence spans 393 residues: Short-chain dehydrogenase/reductase family 42E member 1 (393 aa).

Catalysis depends on Tyr152, which acts as the Proton acceptor. Lys156 contributes to the NAD(+) binding site. The next 2 membrane-spanning stretches (helical) occupy residues 282–302 (LPLT…FILG) and 371–391 (GLVI…SVIL).

Belongs to the 3-beta-HSD family.

It localises to the membrane. The chain is Short-chain dehydrogenase/reductase family 42E member 1 (SDR42E1) from Bos taurus (Bovine).